Reading from the N-terminus, the 392-residue chain is Protein FAM53C (392 aa).

Met-1 carries the N-acetylmethionine modification. Residues 76 to 120 are disordered; the sequence is LHLRPPSPGSSPQEQSLSQVLSPEPPDPEKLPVPPAPPSKRHCRS. Positions 85–97 are enriched in low complexity; sequence SSPQEQSLSQVLS. Ser-122 and Ser-162 each carry phosphoserine. Disordered stretches follow at residues 141–167 and 201–294; these read LWTPIKHRGSGGGGGPQVPHQSPPKRV and DSSH…EDPR. The segment covering 201–215 has biased composition (polar residues); the sequence is DSSHPSAASPQSGSW. 4 positions are modified to phosphoserine: Ser-232, Ser-234, Ser-255, and Ser-273. Residues 241-256 show a composition bias toward low complexity; the sequence is ASRFLPSARSSPASSP. Residues 278 to 294 show a composition bias toward basic and acidic residues; that stretch reads LDARKAGVKRRHEEDPR. At Ser-299 the chain carries Phosphoserine.

The protein belongs to the FAM53 family.

This chain is Protein FAM53C, found in Bos taurus (Bovine).